The sequence spans 472 residues: Pyruvate kinase (472 aa).

Position 33 (Arg33) interacts with substrate. K(+) contacts are provided by Asn35, Ser37, and Asp67. Asn35 to His38 lines the ATP pocket. Positions 74 and 155 each coordinate ATP. Glu220 is a binding site for Mg(2+). The substrate site is built by Gly243, Asp244, and Thr276. Residue Asp244 coordinates Mg(2+).

Belongs to the pyruvate kinase family. As to quaternary structure, homotetramer. Mg(2+) is required as a cofactor. K(+) serves as cofactor.

The enzyme catalyses pyruvate + ATP = phosphoenolpyruvate + ADP + H(+). It functions in the pathway carbohydrate degradation; glycolysis; pyruvate from D-glyceraldehyde 3-phosphate: step 5/5. In Mycobacterium tuberculosis (strain CDC 1551 / Oshkosh), this protein is Pyruvate kinase (pyk).